Here is a 259-residue protein sequence, read N- to C-terminus: MRSATKLFKNLSKSVVQLKTVKPVSSLNFGYIKTRQFSTSTTDSSNLFLNNNNQFQNFTFPTKQQIRIRKPAPAFKGQAVVNGEFKEISLDDYKGKYLYLFFYPLDFTFVCPTEIIAFSNAAEEFKKAGCELVGCSIDSPFTHLAWINTPRKEGGLGGINIPLLSDLTHQISKDYGVYIEEDGHTIRGSILIDKEGLVRVITMNDNPVGRSVDEAIRTLKALKFTDQFGEVCPANWSEGDKSMKADPKGSKEYFEAVNK.

One can recognise a Thioredoxin domain in the interval 66–224 (IRIRKPAPAF…AIRTLKALKF (159 aa)). Cys-111 acts as the Cysteine sulfenic acid (-SOH) intermediate in catalysis.

This sequence belongs to the peroxiredoxin family. AhpC/Prx1 subfamily. In terms of assembly, homodimer; disulfide-linked, upon oxidation. 5 homodimers assemble to form a ring-like decamer.

It is found in the cytoplasm. Its subcellular location is the endoplasmic reticulum. The catalysed reaction is a hydroperoxide + [thioredoxin]-dithiol = an alcohol + [thioredoxin]-disulfide + H2O. In terms of biological role, thiol-specific peroxidase that catalyzes the reduction of hydrogen peroxide and organic hydroperoxides to water and alcohols, respectively. Plays a role in cell protection against oxidative stress by detoxifying peroxides and as sensor of hydrogen peroxide-mediated signaling events. Regulates the activation of NF-kappa-B in the cytosol by a modulation of I-kappa-B-alpha phosphorylation. The chain is Peroxiredoxin-4 (prdx4) from Dictyostelium discoideum (Social amoeba).